The chain runs to 86 residues: Anti-adapter protein IraP (86 aa).

Positions 1–36 (MKNLISELLLRLAQKEEESKELVAQVEALEIIVTAM) form a coiled coil.

This sequence belongs to the IraP family. As to quaternary structure, interacts with RssB.

The protein localises to the cytoplasm. Inhibits RpoS proteolysis by regulating RssB activity, thereby increasing the stability of the sigma stress factor RpoS especially during phosphate starvation, but also in stationary phase and during nitrogen starvation. Its effect on RpoS stability is due to its interaction with RssB, which probably blocks the interaction of RssB with RpoS, and the consequent delivery of the RssB-RpoS complex to the ClpXP protein degradation pathway. The protein is Anti-adapter protein IraP of Citrobacter koseri (strain ATCC BAA-895 / CDC 4225-83 / SGSC4696).